The primary structure comprises 268 residues: Cytochrome c oxidase subunit 3 (268 aa).

Transmembrane regions (helical) follow at residues 19 to 39 (PWPI…VLTM), 49 to 69 (FDLG…DIVI), 85 to 105 (LIIG…SVFW), 124 to 144 (PVGI…IILL), 165 to 185 (SIIG…FQAF), 202 to 222 (VFFA…LFLF), and 245 to 265 (ILYW…VYFW).

This sequence belongs to the cytochrome c oxidase subunit 3 family. Component of the cytochrome c oxidase (complex IV, CIV), a multisubunit enzyme composed of a catalytic core of 3 subunits and several supernumerary subunits. The complex exists as a monomer or a dimer and forms supercomplexes (SCs) in the inner mitochondrial membrane with ubiquinol-cytochrome c oxidoreductase (cytochrome b-c1 complex, complex III, CIII).

The protein resides in the mitochondrion inner membrane. The enzyme catalyses 4 Fe(II)-[cytochrome c] + O2 + 8 H(+)(in) = 4 Fe(III)-[cytochrome c] + 2 H2O + 4 H(+)(out). Component of the cytochrome c oxidase, the last enzyme in the mitochondrial electron transport chain which drives oxidative phosphorylation. The respiratory chain contains 3 multisubunit complexes succinate dehydrogenase (complex II, CII), ubiquinol-cytochrome c oxidoreductase (cytochrome b-c1 complex, complex III, CIII) and cytochrome c oxidase (complex IV, CIV), that cooperate to transfer electrons derived from NADH and succinate to molecular oxygen, creating an electrochemical gradient over the inner membrane that drives transmembrane transport and the ATP synthase. Cytochrome c oxidase is the component of the respiratory chain that catalyzes the reduction of oxygen to water. Electrons originating from reduced cytochrome c in the intermembrane space (IMS) are transferred via the dinuclear copper A center (CU(A)) of subunit 2 and heme A of subunit 1 to the active site in subunit 1, a binuclear center (BNC) formed by heme A3 and copper B (CU(B)). The BNC reduces molecular oxygen to 2 water molecules using 4 electrons from cytochrome c in the IMS and 4 protons from the mitochondrial matrix. The chain is Cytochrome c oxidase subunit 3 (COIII) from Schizophyllum commune (Split gill fungus).